Consider the following 442-residue polypeptide: Histidinol dehydrogenase (442 aa).

NAD(+)-binding residues include Tyr-138, Gln-196, and Asn-219. Substrate contacts are provided by Ser-245, Gln-267, and His-270. Zn(2+)-binding residues include Gln-267 and His-270. Residues Glu-334 and His-335 each act as proton acceptor in the active site. Substrate contacts are provided by His-335, Asp-368, Glu-422, and His-427. Asp-368 lines the Zn(2+) pocket. Residue His-427 coordinates Zn(2+).

This sequence belongs to the histidinol dehydrogenase family. Homodimer. Zn(2+) is required as a cofactor.

The catalysed reaction is L-histidinol + 2 NAD(+) + H2O = L-histidine + 2 NADH + 3 H(+). It participates in amino-acid biosynthesis; L-histidine biosynthesis; L-histidine from 5-phospho-alpha-D-ribose 1-diphosphate: step 9/9. Functionally, catalyzes the sequential NAD-dependent oxidations of L-histidinol to L-histidinaldehyde and then to L-histidine. This chain is Histidinol dehydrogenase, found in Pectobacterium atrosepticum (strain SCRI 1043 / ATCC BAA-672) (Erwinia carotovora subsp. atroseptica).